A 502-amino-acid polypeptide reads, in one-letter code: Vicilin Jug r 6.0101 (502 aa).

The N-terminal stretch at 1 to 27 (MAFKPKIPIALLLLTSLLAICAGLALA) is a signal peptide. Residues 67-84 (ARERAERRRSEEGSSREE) are compositionally biased toward basic and acidic residues. The disordered stretch occupies residues 67–100 (ARERAERRRSEEGSSREEGYEEEELGGEREEENP). Residues 85 to 100 (GYEEEELGGEREEENP) show a composition bias toward acidic residues. Cupin type-1 domains are found at residues 101 to 259 (YVFE…DQLE) and 302 to 475 (FNLF…REVE). An N-linked (GlcNAc...) asparagine glycan is attached at N340. The disordered stretch occupies residues 374–401 (HLSSSGSRGQREGSGSSRRRSRSGPSYQ). Residues 376–389 (SSSGSRGQREGSGS) show a composition bias toward low complexity.

This sequence belongs to the 7S seed storage protein family. In terms of assembly, homotrimer. N-glycosylated; paucimannose-type structures containing xylose. As to expression, expressed in seed (at protein level).

Seed storage protein. This chain is Vicilin Jug r 6.0101, found in Juglans regia (English walnut).